The primary structure comprises 245 residues: tRNA pseudouridine synthase A (245 aa).

D52 (nucleophile) is an active-site residue. A substrate-binding site is contributed by Y110.

It belongs to the tRNA pseudouridine synthase TruA family. In terms of assembly, homodimer.

The enzyme catalyses uridine(38/39/40) in tRNA = pseudouridine(38/39/40) in tRNA. Functionally, formation of pseudouridine at positions 38, 39 and 40 in the anticodon stem and loop of transfer RNAs. In Borrelia turicatae (strain 91E135), this protein is tRNA pseudouridine synthase A.